Consider the following 542-residue polypeptide: Chaperonin GroEL 1 (542 aa).

ATP-binding positions include 29–32 (TIGP), 86–90 (DGTTT), glycine 414, 479–481 (DAL), and aspartate 495.

It belongs to the chaperonin (HSP60) family. Forms a cylinder of 14 subunits composed of two heptameric rings stacked back-to-back. Interacts with the co-chaperonin GroES.

Its subcellular location is the cytoplasm. The enzyme catalyses ATP + H2O + a folded polypeptide = ADP + phosphate + an unfolded polypeptide.. Functionally, together with its co-chaperonin GroES, plays an essential role in assisting protein folding. The GroEL-GroES system forms a nano-cage that allows encapsulation of the non-native substrate proteins and provides a physical environment optimized to promote and accelerate protein folding. This chain is Chaperonin GroEL 1, found in Synechococcus sp. (strain JA-3-3Ab) (Cyanobacteria bacterium Yellowstone A-Prime).